Consider the following 868-residue polypeptide: Leucine--tRNA ligase (868 aa).

The short motif at 42–52 is the 'HIGH' region element; sequence PYPSGKLHMGH. The 'KMSKS' region signature appears at 627-631; the sequence is KMSKS. Residue K630 coordinates ATP.

Belongs to the class-I aminoacyl-tRNA synthetase family.

The protein localises to the cytoplasm. The catalysed reaction is tRNA(Leu) + L-leucine + ATP = L-leucyl-tRNA(Leu) + AMP + diphosphate. The polypeptide is Leucine--tRNA ligase (Pseudomonas entomophila (strain L48)).